Here is a 1050-residue protein sequence, read N- to C-terminus: MSKFFIDRPIFAWVIALVIMLVGALSILKLPINQYPSIAPPAIAIAVTYPGASAQTVQDTVVQVIEQQLNGIDNLRYVSSESNSDGSMTITATFEQGTNPDTAQVQVQNKLNLATPLLPQEVQQQGIRVTKAVKNFLLVIGLVSEDGSMTKDDLANYIVSNMQDPISRTAGVGDFQVFGAQYAMRIWLDPAKLNKFQLTPVDVKTAVAAQNVQVSSGQLGGLPALPGTQLNATIIGKTRLQTAEQFESILLKVNKDGSQVRLGDVAQVGLGGENYAVSAQFNGKPASGLAVKLATGANALDTAKALRETIKGLEPFFPPGVKAVFPYDTTPVVTESISGVIHTLIEAVVLVFLVMYLFLQNFRATIITTMTVPVVLLGTFGILAAAGFSINTLTMFAMVLAIGLLVDDAIVVVENVERVMSEEGLPPKEATKRSMEQIQGALVGIALVLSAVLLPMAFFGGSTGVIYRQFSITIVSAMGLSVLVALIFTPALCATMLKPLKKGEHHTAKGGFFGWFNRNFDRSVNGYERSVGAILRNKVPFLLAYALIVVGMIWLFARIPTAFLPEEDQGVLFAQVQTPAGSSAERTQVVVDQMREYLLKDEADTVSSVFTVNGFNFAGRGQSSGMAFIMLKPWDERSKENSVFALAQRAQQHFFTFRDAMVFAFAPPAVLELGNATGFDVFLQDRGGVGHEKLMEARNQFLAKAAQSKILSAVRPNGLNDEPQYQLTIDDERASALGVTIADINNTLSIALGASYVNDFIDRGRVKKVYIQGEPSARMSPEDLQKWYVRNGAGEMVPFSSFAKGEWTYGSPKLSRYNGVEAMEILGAPAPGYSTGEAMAEVERIAGELPSGIGFSWTGMSYEEKLSGSQMPALFALSVLFVFLCLAALYESWSIPIAVVLVVPLGIIGALIATSLRGLSNDVYFLVGLLTTIGLAAKNAILIVEFAKELHEQGRSLYDAAIEACRMRLRPIIMTSLAFILGVVPLTIASGAGAGSQHAIGTGVIGGMISATVLAIFWVPLFFVAVSSLFGSKEPEKDVTPENPRYEAGQ.

12 consecutive transmembrane segments (helical) span residues 10-30, 339-359, 370-390, 393-413, 440-460, 472-492, 539-559, 871-891, 893-913, 923-943, 972-992, and 1004-1024; these read IFAW…ILKL, GVIH…YLFL, MTVP…GFSI, LTMF…IVVV, GALV…AFFG, ITIV…TPAL, VPFL…FARI, MPAL…ALYE, WSIP…ALIA, VYFL…AILI, IIMT…ASGA, and VIGG…LFFV.

Belongs to the resistance-nodulation-cell division (RND) (TC 2.A.6) family.

The protein localises to the cell inner membrane. In terms of biological role, probable membrane transporter component of the TtgABC efflux pump with unknown specificity. The polypeptide is Probable efflux pump membrane transporter TtgB (ttgB) (Pseudomonas putida (strain ATCC 47054 / DSM 6125 / CFBP 8728 / NCIMB 11950 / KT2440)).